The following is a 69-amino-acid chain: Cytochrome c oxidase subunit 8A, mitochondrial (69 aa).

Residues 1–25 constitute a mitochondrion transit peptide; it reads MSVLTPLLLRGLTGSARRLPVPCAR. The SIFI-degron signature appears at 2–19; that stretch reads SVLTPLLLRGLTGSARRL. Over 26–36 the chain is Mitochondrial matrix; sequence VHSKPPREQLG. A helical transmembrane segment spans residues 37–60; it reads TMDIAIGLTSCFVCFLLPSGWVLS. Over 61 to 69 the chain is Mitochondrial intermembrane; it reads HLENYKKRE.

The protein belongs to the cytochrome c oxidase VIII family. In terms of assembly, component of the cytochrome c oxidase (complex IV, CIV), a multisubunit enzyme composed of 14 subunits. The complex is composed of a catalytic core of 3 subunits MT-CO1, MT-CO2 and MT-CO3, encoded in the mitochondrial DNA, and 11 supernumerary subunits COX4I, COX5A, COX5B, COX6A, COX6B, COX6C, COX7A, COX7B, COX7C, COX8 and NDUFA4, which are encoded in the nuclear genome. The complex exists as a monomer or a dimer and forms supercomplexes (SCs) in the inner mitochondrial membrane with NADH-ubiquinone oxidoreductase (complex I, CI) and ubiquinol-cytochrome c oxidoreductase (cytochrome b-c1 complex, complex III, CIII), resulting in different assemblies (supercomplex SCI(1)III(2)IV(1) and megacomplex MCI(2)III(2)IV(2)). In response to mitochondrial stress, the precursor protein is ubiquitinated by the SIFI complex in the cytoplasm before mitochondrial import, leading to its degradation. Within the SIFI complex, UBR4 initiates ubiquitin chain that are further elongated or branched by KCMF1.

It localises to the mitochondrion inner membrane. It participates in energy metabolism; oxidative phosphorylation. Its function is as follows. Component of the cytochrome c oxidase, the last enzyme in the mitochondrial electron transport chain which drives oxidative phosphorylation. The respiratory chain contains 3 multisubunit complexes succinate dehydrogenase (complex II, CII), ubiquinol-cytochrome c oxidoreductase (cytochrome b-c1 complex, complex III, CIII) and cytochrome c oxidase (complex IV, CIV), that cooperate to transfer electrons derived from NADH and succinate to molecular oxygen, creating an electrochemical gradient over the inner membrane that drives transmembrane transport and the ATP synthase. Cytochrome c oxidase is the component of the respiratory chain that catalyzes the reduction of oxygen to water. Electrons originating from reduced cytochrome c in the intermembrane space (IMS) are transferred via the dinuclear copper A center (CU(A)) of subunit 2 and heme A of subunit 1 to the active site in subunit 1, a binuclear center (BNC) formed by heme A3 and copper B (CU(B)). The BNC reduces molecular oxygen to 2 water molecules using 4 electrons from cytochrome c in the IMS and 4 protons from the mitochondrial matrix. The protein is Cytochrome c oxidase subunit 8A, mitochondrial (COX8A) of Otolemur crassicaudatus (Brown greater galago).